Here is a 155-residue protein sequence, read N- to C-terminus: Cytochrome c-550 (155 aa).

Residues 1 to 20 form the signal peptide; the sequence is MKISIYATLAAITLALPAAA. Position 21 is a pyrrolidone carboxylic acid (glutamine 21). Heme c-binding residues include cysteine 35, cysteine 38, histidine 39, and methionine 120. Positions 150-155 are excised as a propeptide; it reads AEGESN.

Binds 1 heme c group covalently per subunit.

This Paracoccus denitrificans protein is Cytochrome c-550 (cycA).